A 264-amino-acid polypeptide reads, in one-letter code: Thymidylate synthase (264 aa).

A dUMP-binding site is contributed by Arg21. His51 contacts (6R)-5,10-methylene-5,6,7,8-tetrahydrofolate. 126–127 (RR) contributes to the dUMP binding site. The active-site Nucleophile is Cys146. DUMP is bound by residues 166–169 (RSGD), Asn177, and 207–209 (HLY). Position 169 (Asp169) interacts with (6R)-5,10-methylene-5,6,7,8-tetrahydrofolate. Ala263 contacts (6R)-5,10-methylene-5,6,7,8-tetrahydrofolate.

This sequence belongs to the thymidylate synthase family. Bacterial-type ThyA subfamily. In terms of assembly, homodimer.

Its subcellular location is the cytoplasm. The enzyme catalyses dUMP + (6R)-5,10-methylene-5,6,7,8-tetrahydrofolate = 7,8-dihydrofolate + dTMP. It functions in the pathway pyrimidine metabolism; dTTP biosynthesis. Functionally, catalyzes the reductive methylation of 2'-deoxyuridine-5'-monophosphate (dUMP) to 2'-deoxythymidine-5'-monophosphate (dTMP) while utilizing 5,10-methylenetetrahydrofolate (mTHF) as the methyl donor and reductant in the reaction, yielding dihydrofolate (DHF) as a by-product. This enzymatic reaction provides an intracellular de novo source of dTMP, an essential precursor for DNA biosynthesis. The polypeptide is Thymidylate synthase (Xanthomonas axonopodis pv. citri (strain 306)).